A 339-amino-acid chain; its full sequence is Quinolinate synthase (339 aa).

His63 and Ser81 together coordinate iminosuccinate. Cys126 contributes to the [4Fe-4S] cluster binding site. Iminosuccinate contacts are provided by residues 152-154 (YVN) and Ser169. Position 211 (Cys211) interacts with [4Fe-4S] cluster. Iminosuccinate-binding positions include 237 to 239 (HPE) and Thr254. [4Fe-4S] cluster is bound at residue Cys297.

The protein belongs to the quinolinate synthase family. Type 2 subfamily. [4Fe-4S] cluster is required as a cofactor.

It is found in the cytoplasm. The enzyme catalyses iminosuccinate + dihydroxyacetone phosphate = quinolinate + phosphate + 2 H2O + H(+). It functions in the pathway cofactor biosynthesis; NAD(+) biosynthesis; quinolinate from iminoaspartate: step 1/1. Functionally, catalyzes the condensation of iminoaspartate with dihydroxyacetone phosphate to form quinolinate. This is Quinolinate synthase from Xylella fastidiosa (strain Temecula1 / ATCC 700964).